The following is a 402-amino-acid chain: Beta sliding clamp (402 aa).

The protein belongs to the beta sliding clamp family. As to quaternary structure, forms a ring-shaped head-to-tail homodimer around DNA which binds and tethers DNA polymerases and other proteins to the DNA. The DNA replisome complex has a single clamp-loading complex (3 tau and 1 each of delta, delta', psi and chi subunits) which binds 3 Pol III cores (1 core on the leading strand and 2 on the lagging strand) each with a beta sliding clamp dimer. Additional proteins in the replisome are other copies of gamma, psi and chi, Ssb, DNA helicase and RNA primase.

The protein localises to the cytoplasm. Confers DNA tethering and processivity to DNA polymerases and other proteins. Acts as a clamp, forming a ring around DNA (a reaction catalyzed by the clamp-loading complex) which diffuses in an ATP-independent manner freely and bidirectionally along dsDNA. Initially characterized for its ability to contact the catalytic subunit of DNA polymerase III (Pol III), a complex, multichain enzyme responsible for most of the replicative synthesis in bacteria; Pol III exhibits 3'-5' exonuclease proofreading activity. The beta chain is required for initiation of replication as well as for processivity of DNA replication. In Mycobacterium bovis (strain ATCC BAA-935 / AF2122/97), this protein is Beta sliding clamp (dnaN).